The following is a 142-amino-acid chain: uncharacterized protein (142 aa).

This is an uncharacterized protein from Mycobacterium tuberculosis (strain CDC 1551 / Oshkosh).